We begin with the raw amino-acid sequence, 81 residues long: Centromere protein X (81 aa).

Methionine 1 carries the N-acetylmethionine modification.

It belongs to the CENP-X/MHF2 family. In terms of assembly, heterodimer with CENPX, sometimes called MHF; this interaction stabilizes both partners. MHF heterodimers can assemble to form tetrameric structures. MHF also coassemble with CENPT-CENPW heterodimers at centromeres to form the tetrameric CENP-T-W-S-X complex. Forms a discrete complex with FANCM and CENPX, called FANCM-MHF; this interaction, probably mediated by direct binding between CENPS and FANCM, leads to synergistic activation of double-stranded DNA binding and strongly stimulates FANCM-mediated DNA remodeling. Recruited by FANCM to the Fanconi anemia (FA) core complex, which consists of CENPS, CENPX, FANCA, FANCB, FANCC, FANCE, FANCF, FANCG, FANCL, FANCM, FAAP24 and FAAP100. The FA core complex associates with Bloom syndrome (BLM) complex, which consists of at least BLM, DNA topoisomerase 3-alpha (TOP3A), RMI1/BLAP75, RPA1/RPA70 and RPA2/RPA32. The super complex between FA and BLM is called BRAFT.

It localises to the nucleus. It is found in the chromosome. The protein localises to the centromere. The protein resides in the kinetochore. Functionally, DNA-binding component of the Fanconi anemia (FA) core complex. Required for the normal activation of the FA pathway, leading to monoubiquitination of the FANCI-FANCD2 complex in response to DNA damage, cellular resistance to DNA cross-linking drugs, and prevention of chromosomal breakage. In complex with CENPS (MHF heterodimer), crucial cofactor for FANCM in both binding and ATP-dependent remodeling of DNA. Stabilizes FANCM. In complex with CENPS and FANCM (but not other FANC proteins), rapidly recruited to blocked forks and promotes gene conversion at blocked replication forks. In complex with CENPS, CENPT and CENPW (CENP-T-W-S-X heterotetramer), involved in the formation of a functional kinetochore outer plate, which is essential for kinetochore-microtubule attachment and faithful mitotic progression. As a component of MHF and CENP-T-W-S-X complexes, binds DNA and bends it to form a nucleosome-like structure. DNA-binding function is fulfilled in the presence of CENPS, with the following preference for DNA substates: Holliday junction &gt; double-stranded &gt; splay arm &gt; single-stranded. Does not bind DNA on its own. In Homo sapiens (Human), this protein is Centromere protein X (CENPX).